Consider the following 190-residue polypeptide: Protein GrpE (190 aa).

The protein belongs to the GrpE family. Homodimer.

Its subcellular location is the cytoplasm. Functionally, participates actively in the response to hyperosmotic and heat shock by preventing the aggregation of stress-denatured proteins, in association with DnaK and GrpE. It is the nucleotide exchange factor for DnaK and may function as a thermosensor. Unfolded proteins bind initially to DnaJ; upon interaction with the DnaJ-bound protein, DnaK hydrolyzes its bound ATP, resulting in the formation of a stable complex. GrpE releases ADP from DnaK; ATP binding to DnaK triggers the release of the substrate protein, thus completing the reaction cycle. Several rounds of ATP-dependent interactions between DnaJ, DnaK and GrpE are required for fully efficient folding. The polypeptide is Protein GrpE (Streptococcus agalactiae serotype III (strain NEM316)).